Here is a 345-residue protein sequence, read N- to C-terminus: MFSSLYPLARASLFKMDAEDAHHLTLRALGAAGRTGLACALSARVPDAPRTVMGLTFRNPVGLAAGLDKDGAAIDGLAALGFGFIEVGTVTPRAQPGNPRPRMFRLPQAEALINRMGFNNHGVDQFVKNVQAARYRGILGLNIGKNADTPIERAAEDYLYCLERVYPFASYVTINISSPNTKNLRQLQGAGELDALLAALKDKQQRLADLHGKLVPLALKIAPDLDDEQVKEIGDTLLRHKIEAVIATNTTLSRAAVQGLPHADEAGGLSGRPVFDASNEVIRKLHAEVGSEVPIIGVGGIFSGEDARAKLAAGAALVQLYTGFIYRGPALVSECVKAIARERTA.

FMN-binding positions include 65–69 (AGLDK) and T89. K69 provides a ligand contact to substrate. 114–118 (NRMGF) lines the substrate pocket. Residues N142 and N175 each contribute to the FMN site. N175 serves as a coordination point for substrate. S178 (nucleophile) is an active-site residue. N180 contributes to the substrate binding site. FMN-binding residues include K220 and T248. 249–250 (NT) lines the substrate pocket. FMN is bound by residues G271, G300, and 321–322 (YT).

Belongs to the dihydroorotate dehydrogenase family. Type 2 subfamily. Monomer. The cofactor is FMN.

It localises to the cell membrane. The enzyme catalyses (S)-dihydroorotate + a quinone = orotate + a quinol. The protein operates within pyrimidine metabolism; UMP biosynthesis via de novo pathway; orotate from (S)-dihydroorotate (quinone route): step 1/1. Its function is as follows. Catalyzes the conversion of dihydroorotate to orotate with quinone as electron acceptor. The protein is Dihydroorotate dehydrogenase (quinone) of Burkholderia lata (strain ATCC 17760 / DSM 23089 / LMG 22485 / NCIMB 9086 / R18194 / 383).